Here is a 99-residue protein sequence, read N- to C-terminus: METLSFEFPAGQPPKGRALVGVVGSGDLEVLLEPGSPGKLSIQVVTSVNGASLRWKHLFERMFDGQTPPALSIDIHDFGATPGVVRLRLEQGFEEIGHD.

Ser25 carries the post-translational modification O-(phosphoribosyl dephospho-coenzyme A)serine.

This sequence belongs to the MdcC family. Covalently binds the prosthetic group of malonate decarboxylase.

It is found in the cytoplasm. In terms of biological role, subunit of malonate decarboxylase, it is an acyl carrier protein to which acetyl and malonyl thioester residues are bound via a 2'-(5''-phosphoribosyl)-3'-dephospho-CoA prosthetic group and turn over during the catalytic mechanism. This Pseudomonas savastanoi pv. phaseolicola (strain 1448A / Race 6) (Pseudomonas syringae pv. phaseolicola (strain 1448A / Race 6)) protein is Malonate decarboxylase acyl carrier protein.